Here is a 364-residue protein sequence, read N- to C-terminus: Molybdenum import ATP-binding protein ModC (364 aa).

The ABC transporter domain maps to 1–229; that stretch reads MLLIDIKKQL…PLMRPWLNAS (229 aa). Residue 31–38 coordinates ATP; that stretch reads GRSGAGKS. The Mop domain maps to 293–360; the sequence is HSSIRNILPV…IKGVSVTQSD (68 aa).

It belongs to the ABC transporter superfamily. Molybdate importer (TC 3.A.1.8) family. In terms of assembly, the complex is composed of two ATP-binding proteins (ModC), two transmembrane proteins (ModB) and a solute-binding protein (ModA).

It is found in the cell inner membrane. It carries out the reaction molybdate(out) + ATP + H2O = molybdate(in) + ADP + phosphate + H(+). Functionally, part of the ABC transporter complex ModABC involved in molybdenum import. Responsible for energy coupling to the transport system. In Aliivibrio fischeri (strain ATCC 700601 / ES114) (Vibrio fischeri), this protein is Molybdenum import ATP-binding protein ModC.